The sequence spans 509 residues: Photosystem II CP47 reaction center protein (509 aa).

The next 6 membrane-spanning stretches (helical) occupy residues 21 to 36 (AVHMMHTALVAGWAGS), 101 to 115 (IVFSGLCFLAAIWHW), 140 to 156 (GIHLFLSGVACFGFGAF), 203 to 218 (IAAGTLGILAGLFHLS), 237 to 253 (VLSSSSIAAVFFAAFVV), and 458 to 473 (SFALLFFFGHIWHGSR).

The protein belongs to the PsbB/PsbC family. PsbB subfamily. PSII is composed of 1 copy each of membrane proteins PsbA, PsbB, PsbC, PsbD, PsbE, PsbF, PsbH, PsbI, PsbJ, PsbK, PsbL, PsbM, PsbT, PsbX, PsbY, PsbZ, Psb30/Ycf12, at least 3 peripheral proteins of the oxygen-evolving complex and a large number of cofactors. It forms dimeric complexes. Binds multiple chlorophylls. PSII binds additional chlorophylls, carotenoids and specific lipids. serves as cofactor.

It localises to the plastid. It is found in the chloroplast thylakoid membrane. In terms of biological role, one of the components of the core complex of photosystem II (PSII). It binds chlorophyll and helps catalyze the primary light-induced photochemical processes of PSII. PSII is a light-driven water:plastoquinone oxidoreductase, using light energy to abstract electrons from H(2)O, generating O(2) and a proton gradient subsequently used for ATP formation. This is Photosystem II CP47 reaction center protein from Populus deltoides (Eastern poplar).